Reading from the N-terminus, the 119-residue chain is Large ribosomal subunit protein bL20 (119 aa).

It belongs to the bacterial ribosomal protein bL20 family.

Functionally, binds directly to 23S ribosomal RNA and is necessary for the in vitro assembly process of the 50S ribosomal subunit. It is not involved in the protein synthesizing functions of that subunit. The protein is Large ribosomal subunit protein bL20 of Rhodopseudomonas palustris (strain BisB18).